Here is a 73-residue protein sequence, read N- to C-terminus: Large ribosomal subunit protein bL31 (73 aa).

It belongs to the bacterial ribosomal protein bL31 family. Type A subfamily. Part of the 50S ribosomal subunit.

Its function is as follows. Binds the 23S rRNA. The chain is Large ribosomal subunit protein bL31 from Ruegeria sp. (strain TM1040) (Silicibacter sp.).